We begin with the raw amino-acid sequence, 95 residues long: Aspartyl/glutamyl-tRNA(Asn/Gln) amidotransferase subunit C (95 aa).

Belongs to the GatC family. In terms of assembly, heterotrimer of A, B and C subunits.

The catalysed reaction is L-glutamyl-tRNA(Gln) + L-glutamine + ATP + H2O = L-glutaminyl-tRNA(Gln) + L-glutamate + ADP + phosphate + H(+). It catalyses the reaction L-aspartyl-tRNA(Asn) + L-glutamine + ATP + H2O = L-asparaginyl-tRNA(Asn) + L-glutamate + ADP + phosphate + 2 H(+). In terms of biological role, allows the formation of correctly charged Asn-tRNA(Asn) or Gln-tRNA(Gln) through the transamidation of misacylated Asp-tRNA(Asn) or Glu-tRNA(Gln) in organisms which lack either or both of asparaginyl-tRNA or glutaminyl-tRNA synthetases. The reaction takes place in the presence of glutamine and ATP through an activated phospho-Asp-tRNA(Asn) or phospho-Glu-tRNA(Gln). The protein is Aspartyl/glutamyl-tRNA(Asn/Gln) amidotransferase subunit C of Campylobacter curvus (strain 525.92).